The primary structure comprises 541 residues: 2-hydroxyacylsphingosine 1-beta-galactosyltransferase (541 aa).

Residues 1 to 20 form the signal peptide; it reads MKSYTPYFMLLWSAVGIARA. Residues N78, N333, and N442 are each glycosylated (N-linked (GlcNAc...) asparagine). Residues 472–492 traverse the membrane as a helical segment; the sequence is YFLLDIAFVLLLGAVLLYFIL. Positions 518 to 541 are disordered; the sequence is HYQNGIRNGKYKGNGRVKHEKKVR. The segment covering 526 to 541 has biased composition (basic residues); sequence GKYKGNGRVKHEKKVR.

The protein belongs to the UDP-glycosyltransferase family.

It is found in the membrane. Its subcellular location is the endoplasmic reticulum. The catalysed reaction is an N-acylsphing-4-enine + UDP-alpha-D-galactose = a beta-D-galactosyl-(1&lt;-&gt;1')-N-acylsphing-4-enine + UDP + H(+). It catalyses the reaction N-(2-hydroxy-hexanoyl)-sphing-4-enine + UDP-alpha-D-galactose = N-(2-hydroxy-hexanoyl)-beta-D-galactosyl-sphing-4-enine + UDP + H(+). The enzyme catalyses N-(2-hydroxy-hexanoyl)-sphinganine + UDP-alpha-D-galactose = N-(2-hydroxyhexanoyl)-beta-D-galactosylsphinganine + UDP + H(+). It carries out the reaction an N-acyl-sphingoid base + UDP-alpha-D-galactose = a D-galactosylceramide + UDP + H(+). Its pathway is sphingolipid metabolism; galactosylceramide biosynthesis. Catalyzes the transfer of galactose to ceramide, a key enzymatic step in the biosynthesis of galactocerebrosides, which are abundant sphingolipids of the myelin membrane of the central nervous system and peripheral nervous system. Galactosylates both hydroxy- and non-hydroxy fatty acid-containing ceramides and diglycerides. This is 2-hydroxyacylsphingosine 1-beta-galactosyltransferase from Mus musculus (Mouse).